The sequence spans 246 residues: YjeF N-terminal domain-containing 3 (246 aa).

The region spanning 24–234 (VATVETELLR…DIQKKYELNL (211 aa)) is the YjeF N-terminal domain.

In terms of assembly, interacts with apoa1a. Binds to high-density lipoprotein.

Accelerates cholesterol efflux from endothelial cells to high-density lipoprotein (HDL) and thereby regulates angiogenesis. Orchestrates hematopoietic stem and progenitor cell emergence from the hemogenic endothelium, a type of specialized endothelium manifesting hematopoietic potential. YJEFN3-mediated cholesterol efflux activates endothelial SREBF2, the master transcription factor for cholesterol biosynthesis, which in turn transactivates NOTCH and promotes hematopoietic stem and progenitor cell emergence. This is YjeF N-terminal domain-containing 3 from Danio rerio (Zebrafish).